A 699-amino-acid chain; its full sequence is Elongation factor G (699 aa).

In terms of domain architecture, tr-type G spans 8 to 283 (EHIRNIGICA…AVVDFLPSPI (276 aa)). GTP is bound by residues 17-24 (AHIDAGKT), 81-85 (DTPGH), and 135-138 (NKMD).

Belongs to the TRAFAC class translation factor GTPase superfamily. Classic translation factor GTPase family. EF-G/EF-2 subfamily.

The protein localises to the cytoplasm. In terms of biological role, catalyzes the GTP-dependent ribosomal translocation step during translation elongation. During this step, the ribosome changes from the pre-translocational (PRE) to the post-translocational (POST) state as the newly formed A-site-bound peptidyl-tRNA and P-site-bound deacylated tRNA move to the P and E sites, respectively. Catalyzes the coordinated movement of the two tRNA molecules, the mRNA and conformational changes in the ribosome. This Rickettsia helvetica protein is Elongation factor G.